The following is a 307-amino-acid chain: Protoheme IX farnesyltransferase (307 aa).

Helical transmembrane passes span Met32–Phe52, Phe65–Ile85, Pro108–Leu128, Pro131–Trp151, Leu158–Ile178, Ile186–Ala206, Leu251–Phe271, and Phe287–Phe307.

This sequence belongs to the UbiA prenyltransferase family. Protoheme IX farnesyltransferase subfamily. As to quaternary structure, interacts with CtaA.

It localises to the cell membrane. It catalyses the reaction heme b + (2E,6E)-farnesyl diphosphate + H2O = Fe(II)-heme o + diphosphate. It functions in the pathway porphyrin-containing compound metabolism; heme O biosynthesis; heme O from protoheme: step 1/1. Converts heme B (protoheme IX) to heme O by substitution of the vinyl group on carbon 2 of heme B porphyrin ring with a hydroxyethyl farnesyl side group. The polypeptide is Protoheme IX farnesyltransferase (Bacillus cereus (strain G9842)).